Consider the following 317-residue polypeptide: Ribosomal protein L11 methyltransferase (317 aa).

Positions 158, 179, 201, and 244 each coordinate S-adenosyl-L-methionine.

Belongs to the methyltransferase superfamily. PrmA family.

Its subcellular location is the cytoplasm. The enzyme catalyses L-lysyl-[protein] + 3 S-adenosyl-L-methionine = N(6),N(6),N(6)-trimethyl-L-lysyl-[protein] + 3 S-adenosyl-L-homocysteine + 3 H(+). In terms of biological role, methylates ribosomal protein L11. In Streptococcus agalactiae serotype Ia (strain ATCC 27591 / A909 / CDC SS700), this protein is Ribosomal protein L11 methyltransferase.